Here is a 223-residue protein sequence, read N- to C-terminus: Phosphoribosylformylglycinamidine synthase subunit PurQ (223 aa).

The region spanning 4–223 (KIGVITFPGT…FLSAVGTIAA (220 aa)) is the Glutamine amidotransferase type-1 domain. Cys-87 functions as the Nucleophile in the catalytic mechanism. Catalysis depends on residues His-195 and Glu-197.

In terms of assembly, part of the FGAM synthase complex composed of 1 PurL, 1 PurQ and 2 PurS subunits.

It is found in the cytoplasm. It carries out the reaction N(2)-formyl-N(1)-(5-phospho-beta-D-ribosyl)glycinamide + L-glutamine + ATP + H2O = 2-formamido-N(1)-(5-O-phospho-beta-D-ribosyl)acetamidine + L-glutamate + ADP + phosphate + H(+). The enzyme catalyses L-glutamine + H2O = L-glutamate + NH4(+). The protein operates within purine metabolism; IMP biosynthesis via de novo pathway; 5-amino-1-(5-phospho-D-ribosyl)imidazole from N(2)-formyl-N(1)-(5-phospho-D-ribosyl)glycinamide: step 1/2. In terms of biological role, part of the phosphoribosylformylglycinamidine synthase complex involved in the purines biosynthetic pathway. Catalyzes the ATP-dependent conversion of formylglycinamide ribonucleotide (FGAR) and glutamine to yield formylglycinamidine ribonucleotide (FGAM) and glutamate. The FGAM synthase complex is composed of three subunits. PurQ produces an ammonia molecule by converting glutamine to glutamate. PurL transfers the ammonia molecule to FGAR to form FGAM in an ATP-dependent manner. PurS interacts with PurQ and PurL and is thought to assist in the transfer of the ammonia molecule from PurQ to PurL. This Corynebacterium glutamicum (strain ATCC 13032 / DSM 20300 / JCM 1318 / BCRC 11384 / CCUG 27702 / LMG 3730 / NBRC 12168 / NCIMB 10025 / NRRL B-2784 / 534) protein is Phosphoribosylformylglycinamidine synthase subunit PurQ.